Here is a 147-residue protein sequence, read N- to C-terminus: D(1B) dopamine receptor (147 aa).

The helical transmembrane segment at 1–12 (SILISFPVQLNW) threads the bilayer. Topologically, residues 13–55 (HRDQAGSWGGLDLTNNLANWTPWEEDVWEPDVRAENCDSSLNR) are extracellular. N-linked (GlcNAc...) asparagine glycosylation is present at Asn-54. A helical transmembrane segment spans residues 56–78 (TYAISSSLVSFYIPVAIMIVTYT). The Cytoplasmic segment spans residues 79–128 (RIYRIAQVQIRRISSLERAAEHAQSCRSSAACAPDTSLRASIKKETKVLK). A helical membrane pass occupies residues 129–147 (TLSVIMGVFVCCWLPFFIL).

This sequence belongs to the G-protein coupled receptor 1 family.

The protein localises to the cell membrane. Functionally, dopamine receptor whose activity is mediated by G proteins which activate adenylyl cyclase. The polypeptide is D(1B) dopamine receptor (DRD5) (Macaca mulatta (Rhesus macaque)).